Here is a 955-residue protein sequence, read N- to C-terminus: uncharacterized protein (955 aa).

The region spanning 23-90 (ANNYLEEFQK…RNSLLQLFLA (68 aa)) is the Importin N-terminal domain.

This is an uncharacterized protein from Schizosaccharomyces pombe (strain 972 / ATCC 24843) (Fission yeast).